The following is a 443-amino-acid chain: Serine/threonine-protein kinase Nek2 (443 aa).

A Protein kinase domain is found at 8–271 (YEVLHSIGTG…VEEILESPLI (264 aa)). Residues 14–22 (IGTGSYGRC) and Lys-37 contribute to the ATP site. The active-site Proton acceptor is Asp-141. Residue Thr-170 is modified to Phosphothreonine; by autocatalysis. A Phosphoserine; by autocatalysis modification is found at Ser-171. Phosphothreonine; by autocatalysis occurs at positions 175 and 179. A Phosphoserine modification is found at Ser-184. Ser-241 carries the phosphoserine; by autocatalysis modification. The interval 264–443 (EILESPLIAD…LKSRQILGMR (180 aa)) is interaction with PCNT. Residues 282–292 (NLERRGRRSGE) are compositionally biased toward basic and acidic residues. Residues 282–303 (NLERRGRRSGEPSKLPDSSPVL) form a disordered region. At Ser-300 the chain carries Phosphoserine. Residues 301–443 (PVLSELKLKE…LKSRQILGMR (143 aa)) are interaction with CEP85. Positions 303–361 (LSELKLKERQLQDREQALRAREDILEQKERELCIRERLAEDKLARAESLMKNYSLLKEH) form a coiled coil. Residues 306–334 (LKLKERQLQDREQALRAREDILEQKEREL) are leucine-zipper. The segment at 329 to 443 (QKERELCIRE…LKSRQILGMR (115 aa)) is necessary for interaction with MAD1L1. The segment at 333 to 370 (ELCIRERLAEDKLARAESLMKNYSLLKEHRLLCLAGGP) is required for microtubule binding and for localization to the centrosomes. A Phosphoserine; by STK3/MST2 modification is found at Ser-356. Residues 383 to 402 (VHFHGESKENTARSENSESY) are disordered. Basic and acidic residues predominate over residues 385-398 (FHGESKENTARSEN). Phosphoserine is present on residues Ser-389, Ser-396, and Ser-401. Positions 402-437 (YLAKSKCRDLKKRLHAAQLRAQALADIEKNYQLKSR) are interaction with SAV1 and STK3/MST2. Residues 403-427 (LAKSKCRDLKKRLHAAQLRAQALAD) adopt a coiled-coil conformation. Ser-436 is modified (phosphoserine; by STK3/MST2).

This sequence belongs to the protein kinase superfamily. NEK Ser/Thr protein kinase family. NIMA subfamily. In terms of assembly, forms homodimers and heterodimers. Interacts with CDC20, CTNB1, MAD1L1, MAD2L1, MAPK, NEK11, NPM1, NDC80, PCNT, PPP1CA, PPP1CC and SGO1. Interacts with STK3/MST2 (via SARAH domain) and SAV1 (via SARAH domain). Interacts with NECAB3 and HMGA2. Interacts with CEP68; the interaction leads to phosphorylation of CEP68. Interacts with CNTLN; the interaction leads to phosphorylation of CNTLN. Interacts with CEP85. Mg(2+) is required as a cofactor. In terms of processing, activated by autophosphorylation. Protein phosphatase 1 represses autophosphorylation and activation of isoform 1 by dephosphorylation. Phosphorylation by STK3/MST2 is necessary for its localization to the centrosome. In terms of tissue distribution, most abundantly expressed in testis. Low levels found in mid-gestation embryo, ovary, placenta, intestine, thymus and skin. Within the testis, expression restricted to germ cells with highest levels detected in spermatocytes at pachytene and diplotene stages. Also expressed in meiotic pachytene oocytes.

Its subcellular location is the nucleus. The protein resides in the nucleolus. It is found in the cytoplasm. The protein localises to the cytoskeleton. It localises to the microtubule organizing center. Its subcellular location is the centrosome. The protein resides in the spindle pole. It is found in the chromosome. The protein localises to the centromere. It localises to the kinetochore. It catalyses the reaction L-seryl-[protein] + ATP = O-phospho-L-seryl-[protein] + ADP + H(+). The catalysed reaction is L-threonyl-[protein] + ATP = O-phospho-L-threonyl-[protein] + ADP + H(+). Its catalytic activity is inhibited by the inhibitor CCT241950. In the presence of this inhibitor, displays an autoinhibited conformation: Tyr-70 side chain points into the active site, interacts with the activation loop, and blocks the alphaC helix. Functionally, protein kinase which is involved in the control of centrosome separation and bipolar spindle formation in mitotic cells and chromatin condensation in meiotic cells. Regulates centrosome separation (essential for the formation of bipolar spindles and high-fidelity chromosome separation) by phosphorylating centrosomal proteins such as CROCC, CEP250 and NINL, resulting in their displacement from the centrosomes. Regulates kinetochore microtubule attachment stability in mitosis via phosphorylation of NDC80. Involved in regulation of mitotic checkpoint protein complex via phosphorylation of CDC20 and MAD2L1. Plays an active role in chromatin condensation during the first meiotic division through phosphorylation of HMGA2. Phosphorylates: PPP1CC; SGO1; NECAB3 and NPM1. Essential for localization of MAD2L1 to kinetochore and MAPK1 and NPM1 to the centrosome. Phosphorylates CEP68 and CNTLN directly or indirectly. NEK2-mediated phosphorylation of CEP68 promotes CEP68 dissociation from the centrosome and its degradation at the onset of mitosis. Phosphorylates and activates NEK11 in G1/S-arrested cells. Involved in the regulation of centrosome disjunction. The protein is Serine/threonine-protein kinase Nek2 (Nek2) of Mus musculus (Mouse).